The sequence spans 179 residues: MSRIGKLPIDISKDVKLAFSDSILSVQGPLGKLSRRIMPCVNLEITDSCIIVMRNDESGTARSAHGLTRTLVSNMVNGVTKGFQKSLEINGVGYRAEVKGSELVLSLGYSHPVVFTIPAGVTIEVDKLTKVVVKGFDKELVGETAAKIRSFRPPEPYKGKGVKYADETILRKAGKTGKK.

The protein belongs to the universal ribosomal protein uL6 family. Part of the 50S ribosomal subunit.

In terms of biological role, this protein binds to the 23S rRNA, and is important in its secondary structure. It is located near the subunit interface in the base of the L7/L12 stalk, and near the tRNA binding site of the peptidyltransferase center. The polypeptide is Large ribosomal subunit protein uL6 (Pelobacter propionicus (strain DSM 2379 / NBRC 103807 / OttBd1)).